Here is a 202-residue protein sequence, read N- to C-terminus: FMN-dependent NADH:quinone oxidoreductase 2 (202 aa).

FMN is bound by residues S9, 15-17 (SAS), and 95-98 (MWNL).

This sequence belongs to the azoreductase type 1 family. Homodimer. FMN serves as cofactor.

The enzyme catalyses 2 a quinone + NADH + H(+) = 2 a 1,4-benzosemiquinone + NAD(+). The catalysed reaction is N,N-dimethyl-1,4-phenylenediamine + anthranilate + 2 NAD(+) = 2-(4-dimethylaminophenyl)diazenylbenzoate + 2 NADH + 2 H(+). Functionally, quinone reductase that provides resistance to thiol-specific stress caused by electrophilic quinones. Also exhibits azoreductase activity. Catalyzes the reductive cleavage of the azo bond in aromatic azo compounds to the corresponding amines. The sequence is that of FMN-dependent NADH:quinone oxidoreductase 2 from Hahella chejuensis (strain KCTC 2396).